Here is a 202-residue protein sequence, read N- to C-terminus: Probable cytochrome c oxidase subunit 3 (202 aa).

The next 5 helical transmembrane spans lie at 30–50 (VVWL…YFTA), 69–89 (AVPV…GVFS), 101–121 (WYVI…YEYY), 141–161 (LATG…IFLL), and 178–198 (IVVS…FTVI).

It belongs to the cytochrome c oxidase subunit 3 family.

The protein resides in the cell membrane. The enzyme catalyses 4 Fe(II)-[cytochrome c] + O2 + 8 H(+)(in) = 4 Fe(III)-[cytochrome c] + 2 H2O + 4 H(+)(out). In Mycobacterium leprae (strain TN), this protein is Probable cytochrome c oxidase subunit 3 (ctaE).